We begin with the raw amino-acid sequence, 316 residues long: 4-diphosphocytidyl-2-C-methyl-D-erythritol kinase (316 aa).

Residue Lys32 is part of the active site. Pro126–Ala136 contacts ATP. Asp168 is an active-site residue.

It belongs to the GHMP kinase family. IspE subfamily.

The enzyme catalyses 4-CDP-2-C-methyl-D-erythritol + ATP = 4-CDP-2-C-methyl-D-erythritol 2-phosphate + ADP + H(+). It participates in isoprenoid biosynthesis; isopentenyl diphosphate biosynthesis via DXP pathway; isopentenyl diphosphate from 1-deoxy-D-xylulose 5-phosphate: step 3/6. Its function is as follows. Catalyzes the phosphorylation of the position 2 hydroxy group of 4-diphosphocytidyl-2C-methyl-D-erythritol. The sequence is that of 4-diphosphocytidyl-2-C-methyl-D-erythritol kinase from Bifidobacterium longum (strain DJO10A).